Here is a 227-residue protein sequence, read N- to C-terminus: Cytochrome c oxidase subunit 2 (227 aa).

The Mitochondrial intermembrane portion of the chain corresponds to Met-1–Ser-14. Residues Pro-15–Met-45 traverse the membrane as a helical segment. The Mitochondrial matrix portion of the chain corresponds to Leu-46–Gln-59. The helical transmembrane segment at Glu-60–Met-87 threads the bilayer. The Mitochondrial intermembrane portion of the chain corresponds to Asp-88 to Ile-227. Cu cation contacts are provided by His-161, Cys-196, Glu-198, Cys-200, His-204, and Met-207. Glu-198 lines the Mg(2+) pocket. A Phosphotyrosine modification is found at Tyr-218.

Belongs to the cytochrome c oxidase subunit 2 family. As to quaternary structure, component of the cytochrome c oxidase (complex IV, CIV), a multisubunit enzyme composed of 14 subunits. The complex is composed of a catalytic core of 3 subunits MT-CO1, MT-CO2 and MT-CO3, encoded in the mitochondrial DNA, and 11 supernumerary subunits COX4I, COX5A, COX5B, COX6A, COX6B, COX6C, COX7A, COX7B, COX7C, COX8 and NDUFA4, which are encoded in the nuclear genome. The complex exists as a monomer or a dimer and forms supercomplexes (SCs) in the inner mitochondrial membrane with NADH-ubiquinone oxidoreductase (complex I, CI) and ubiquinol-cytochrome c oxidoreductase (cytochrome b-c1 complex, complex III, CIII), resulting in different assemblies (supercomplex SCI(1)III(2)IV(1) and megacomplex MCI(2)III(2)IV(2)). Found in a complex with TMEM177, COA6, COX18, COX20, SCO1 and SCO2. Interacts with TMEM177 in a COX20-dependent manner. Interacts with COX20. Interacts with COX16. Cu cation serves as cofactor.

The protein localises to the mitochondrion inner membrane. It carries out the reaction 4 Fe(II)-[cytochrome c] + O2 + 8 H(+)(in) = 4 Fe(III)-[cytochrome c] + 2 H2O + 4 H(+)(out). Its function is as follows. Component of the cytochrome c oxidase, the last enzyme in the mitochondrial electron transport chain which drives oxidative phosphorylation. The respiratory chain contains 3 multisubunit complexes succinate dehydrogenase (complex II, CII), ubiquinol-cytochrome c oxidoreductase (cytochrome b-c1 complex, complex III, CIII) and cytochrome c oxidase (complex IV, CIV), that cooperate to transfer electrons derived from NADH and succinate to molecular oxygen, creating an electrochemical gradient over the inner membrane that drives transmembrane transport and the ATP synthase. Cytochrome c oxidase is the component of the respiratory chain that catalyzes the reduction of oxygen to water. Electrons originating from reduced cytochrome c in the intermembrane space (IMS) are transferred via the dinuclear copper A center (CU(A)) of subunit 2 and heme A of subunit 1 to the active site in subunit 1, a binuclear center (BNC) formed by heme A3 and copper B (CU(B)). The BNC reduces molecular oxygen to 2 water molecules using 4 electrons from cytochrome c in the IMS and 4 protons from the mitochondrial matrix. This Rattus norvegicus (Rat) protein is Cytochrome c oxidase subunit 2.